We begin with the raw amino-acid sequence, 196 residues long: Pyridoxal 5'-phosphate synthase subunit PdxT (196 aa).

46–48 is a binding site for L-glutamine; it reads GES. Cysteine 78 acts as the Nucleophile in catalysis. L-glutamine-binding positions include arginine 105 and 133–134; that span reads IR. Catalysis depends on charge relay system residues histidine 169 and glutamate 171.

It belongs to the glutaminase PdxT/SNO family. In terms of assembly, in the presence of PdxS, forms a dodecamer of heterodimers. Only shows activity in the heterodimer.

The catalysed reaction is aldehydo-D-ribose 5-phosphate + D-glyceraldehyde 3-phosphate + L-glutamine = pyridoxal 5'-phosphate + L-glutamate + phosphate + 3 H2O + H(+). The enzyme catalyses L-glutamine + H2O = L-glutamate + NH4(+). Its pathway is cofactor biosynthesis; pyridoxal 5'-phosphate biosynthesis. Catalyzes the hydrolysis of glutamine to glutamate and ammonia as part of the biosynthesis of pyridoxal 5'-phosphate. The resulting ammonia molecule is channeled to the active site of PdxS. The polypeptide is Pyridoxal 5'-phosphate synthase subunit PdxT (Geobacillus kaustophilus (strain HTA426)).